The sequence spans 640 residues: Spindle assembly abnormal protein 6 homolog (640 aa).

The region spanning 40–92 (VHKKDLAVRLTDDADPFFLYNLVISEEDFQSLKSQQGLLVDFSAFPQKFIDLL) is the PISA domain. Residues 154 to 475 (LARCLKCLKE…KQLLKTNENV (322 aa)) adopt a coiled-coil conformation.

As to quaternary structure, nine homodimers form a cartwheel structure with an internal diameter of 23 nM and radial spokes connecting to the microtubule triplets.

Its subcellular location is the cytoplasm. It is found in the cytoskeleton. The protein localises to the microtubule organizing center. The protein resides in the centrosome. Its function is as follows. Central scaffolding component of the centrioles ensuring their 9-fold symmetry. Required for centrosome biogenesis and duplication: required both for mother-centriole-dependent centriole duplication and deuterosome-dependent centriole amplification in multiciliated cells. This Gallus gallus (Chicken) protein is Spindle assembly abnormal protein 6 homolog (SASS6).